We begin with the raw amino-acid sequence, 270 residues long: 5'-nucleotidase SurE (270 aa).

Residues aspartate 8, aspartate 9, serine 40, and asparagine 98 each contribute to the a divalent metal cation site.

It belongs to the SurE nucleotidase family. Requires a divalent metal cation as cofactor.

The protein resides in the cytoplasm. The catalysed reaction is a ribonucleoside 5'-phosphate + H2O = a ribonucleoside + phosphate. Nucleotidase that shows phosphatase activity on nucleoside 5'-monophosphates. The protein is 5'-nucleotidase SurE of Cyanothece sp. (strain PCC 7425 / ATCC 29141).